Consider the following 345-residue polypeptide: SLAM family member 5 (345 aa).

The N-terminal stretch at 1–21 (MAQHHLWILLLCLQTWPEAAG) is a signal peptide. The Extracellular segment spans residues 22–225 (KDSEIFTVNG…AMGFRTHHTG (204 aa)). Residues 26-129 (IFTVNGILGE…TTKRYNLQIY (104 aa)) form the Ig-like V-type domain. One can recognise an Ig-like C2-type domain in the interval 135–207 (PKITQSLMAS…PVSNNSDSIS (73 aa)). N-linked (GlcNAc...) asparagine glycosylation occurs at Asn150. A disulfide bond links Cys155 and Cys193. The helical transmembrane segment at 226–246 (LLSVLAMFFLLVLILSSVFLF) threads the bilayer. Over 247-345 (RLFKRRQGRI…PGTSSYEIVI (99 aa)) the chain is Cytoplasmic. The ITSM 1 signature appears at 277-282 (TIYTYI). Residue Tyr279 is modified to Phosphotyrosine. At Tyr296 the chain carries Phosphotyrosine; by LYN. The ITSM 2 motif lies at 314–319 (TVYSEV). Residue Tyr316 is modified to Phosphotyrosine. The segment at 326-345 (GKASTQDSKPPGTSSYEIVI) is disordered. Residues 328–345 (ASTQDSKPPGTSSYEIVI) show a composition bias toward polar residues. The residue at position 341 (Tyr341) is a Phosphotyrosine; by FES.

As to quaternary structure, homodimer; via its extracellular domain. Forms a head to tail dimer with a CD48 molecule from another cell. Interacts with SH2 domain-containing proteins SH2D1A/SAP and SH2D1B/EAT-2. Interacts with tyrosine-protein phosphatases PTPN6/SHP-1 and PTPN11//SHP-2 via its phosphorylated cytoplasmic domain, and this interaction is blocked by SH2D1A. Interacts (via phosphorylated ITSM 1 and 2) with INPP5D/SHIP1. Phosphorylated by tyrosine-protein kinase LCK on tyrosine residues following ligation induced by agonist monoclonal antibody. The association with SH2D1A is dependent of tyrosine phosphorylation of its cytoplasmic domain. Phosphorylated on Tyr-296 and Tyr-316 following platelet aggregation. Phosphorylated on tyrosine residues upon high affinity immunoglobulin epsilon receptor aggregation in mast cells. Post-translationally, N-glycosylated. Predominantly expressed in hematopoietic tissues, such as lymph node, spleen and peripheral leukocytes. Expressed in macrophages, B-cells, monocytes, platelets, thymocytes, T-cells and dendritic cells. Highly expressed in memory T-cells. Expressed in mast cells.

The protein localises to the cell membrane. Its function is as follows. Self-ligand receptor of the signaling lymphocytic activation molecule (SLAM) family. SLAM receptors triggered by homo- or heterotypic cell-cell interactions are modulating the activation and differentiation of a wide variety of immune cells and thus are involved in the regulation and interconnection of both innate and adaptive immune response. Activities are controlled by presence or absence of small cytoplasmic adapter proteins, SH2D1A/SAP and/or SH2D1B/EAT-2. Can mediate natural killer (NK) cell cytotoxicity dependent on SH2D1A and SH2D1B. Increases proliferative responses of activated T-cells and SH2D1A/SAP does not seem be required for this process. Homophilic interactions enhance interferon gamma/IFNG secretion in lymphocytes and induce platelet stimulation via a SH2D1A-dependent pathway. May serve as a marker for hematopoietic progenitor cells Required for a prolonged T-cell:B-cell contact, optimal T follicular helper function, and germinal center formation. In germinal centers involved in maintaining B-cell tolerance and in preventing autoimmunity. In mast cells negatively regulates high affinity immunoglobulin epsilon receptor signaling; independent of SH2D1A and SH2D1B but implicating FES and PTPN6/SHP-1. In macrophages enhances LPS-induced MAPK phosphorylation and NF-kappaB activation and modulates LPS-induced cytokine secretion; involving ITSM 2. Positively regulates macroautophagy in primary dendritic cells via stabilization of IRF8; inhibits TRIM21-mediated proteasomal degradation of IRF8. The protein is SLAM family member 5 (CD84) of Homo sapiens (Human).